A 267-amino-acid polypeptide reads, in one-letter code: Hydroxynaphthalene reductase-like protein Arp2 (267 aa).

NADP(+)-binding residues include Ile-25, Asn-45, Asp-71, and Asn-98. Active-site proton donor residues include Ser-147 and Ser-148. Positions 162, 166, 195, and 197 each coordinate NADP(+). Tyr-162 functions as the Proton acceptor in the catalytic mechanism. Lys-166 (lowers pKa of active site Tyr) is an active-site residue.

The protein belongs to the short-chain dehydrogenases/reductases (SDR) family.

In terms of biological role, hydroxynaphthalene reductase-like protein; part of the Pks2 gene cluster that mediates the formation of infectious structures (appressoria), enabling these fungi to kill insects faster. The product of the Pks2 gene cluster is different from the one of Pks1 and has still not been identified. This chain is Hydroxynaphthalene reductase-like protein Arp2, found in Metarhizium robertsii (strain ARSEF 23 / ATCC MYA-3075) (Metarhizium anisopliae (strain ARSEF 23)).